Consider the following 446-residue polypeptide: N-succinylarginine dihydrolase (446 aa).

Substrate-binding positions include 19 to 28 (AGLSFGNVAS), Asn-110, and 137 to 138 (HR). Glu-174 is an active-site residue. Substrate is bound at residue Arg-213. Residue His-249 is part of the active site. Substrate-binding residues include Asp-251 and Asn-364. Residue Cys-370 is the Nucleophile of the active site.

Belongs to the succinylarginine dihydrolase family. As to quaternary structure, homodimer.

It carries out the reaction N(2)-succinyl-L-arginine + 2 H2O + 2 H(+) = N(2)-succinyl-L-ornithine + 2 NH4(+) + CO2. Its pathway is amino-acid degradation; L-arginine degradation via AST pathway; L-glutamate and succinate from L-arginine: step 2/5. Functionally, catalyzes the hydrolysis of N(2)-succinylarginine into N(2)-succinylornithine, ammonia and CO(2). In Burkholderia thailandensis (strain ATCC 700388 / DSM 13276 / CCUG 48851 / CIP 106301 / E264), this protein is N-succinylarginine dihydrolase.